The primary structure comprises 444 residues: N-succinylarginine dihydrolase (444 aa).

Residues Ser-19–Ser-28, Asn-110, and His-137–Arg-138 contribute to the substrate site. Glu-174 is a catalytic residue. Arg-214 contacts substrate. Residue His-250 is part of the active site. Substrate contacts are provided by Asp-252 and Asn-362. The active-site Nucleophile is the Cys-368.

This sequence belongs to the succinylarginine dihydrolase family. Homodimer.

The catalysed reaction is N(2)-succinyl-L-arginine + 2 H2O + 2 H(+) = N(2)-succinyl-L-ornithine + 2 NH4(+) + CO2. The protein operates within amino-acid degradation; L-arginine degradation via AST pathway; L-glutamate and succinate from L-arginine: step 2/5. Functionally, catalyzes the hydrolysis of N(2)-succinylarginine into N(2)-succinylornithine, ammonia and CO(2). This Aliivibrio fischeri (strain MJ11) (Vibrio fischeri) protein is N-succinylarginine dihydrolase.